A 319-amino-acid polypeptide reads, in one-letter code: MLKSVQGLWKDFFGIRDDGRKREYGSLDEVRKRSALRSRRKQMRPTGKSVLKRPRKVTDRKTEEKIRTNRRKTPKRRLTKIFQTIRDVFSNDNENMSKMQNVCGDMTRILKKRSQGRPSYMDTDTAKSRILRSDAFKRKISELKYNKQRISELRSGSSDGSSGKDRNQSLYLDREILLQRQIKKRDEKIKALESKLQSLQEALNYSNEKYRILEDLLDSSNIHPSYTKSRRTMSNLARENDEIKPLKIDLSPSPIRRTNSLFTSSPMKTYNRDGNIPEMQPLQENISPACPTPPYRSRETEKEDETLSPISVDFSSYLS.

Basic residues predominate over residues 34 to 43; that stretch reads SALRSRRKQM. The disordered stretch occupies residues 34 to 74; sequence SALRSRRKQMRPTGKSVLKRPRKVTDRKTEEKIRTNRRKTP. A compositionally biased stretch (basic and acidic residues) spans 56-67; sequence KVTDRKTEEKIR. Ser251 and Ser260 each carry phosphoserine. The segment at 278-319 is disordered; it reads EMQPLQENISPACPTPPYRSRETEKEDETLSPISVDFSSYLS.

As to quaternary structure, interacts with NDC1 and MPS2.

This is NAP1-binding protein (NBP1) from Saccharomyces cerevisiae (strain ATCC 204508 / S288c) (Baker's yeast).